We begin with the raw amino-acid sequence, 318 residues long: Mechanosensory protein 3 (318 aa).

2 LIM zinc-binding domains span residues 27–86 (NKCY…DYSA) and 87–152 (HRCA…PMDD). A DNA-binding region (homeobox) is located at residues 214 to 273 (RRGPRTTIRQNQLDVLNEMFSNTPKPSKHARAKLALETGLSMRVIQVWFQNRRSKERRLK).

The protein localises to the nucleus. Specifies differentiation of the set of six touch receptor neurons. Binds cooperatively as a heterodimer with unc-86 to sites in the mec-3 gene promoter. The protein is Mechanosensory protein 3 (mec-3) of Caenorhabditis briggsae.